A 223-amino-acid polypeptide reads, in one-letter code: N-acetylmuramic acid 6-phosphate phosphatase (223 aa).

The Nucleophile role is filled by D9. Residues D9, D11, and D168 each coordinate Mg(2+). Residue D11 is the Proton donor of the active site.

This sequence belongs to the HAD-like hydrolase superfamily. CbbY/CbbZ/Gph/YieH family. Phosphatase MupP subfamily. Requires Mg(2+) as cofactor.

The enzyme catalyses N-acetyl-D-muramate 6-phosphate + H2O = N-acetyl-D-muramate + phosphate. It functions in the pathway cell wall biogenesis; peptidoglycan recycling. Specifically catalyzes the dephosphorylation of N-acetylmuramate 6-phosphate (MurNAc-6P) to MurNac. Is involved in peptidoglycan recycling as part of a cell wall recycling pathway that bypasses de novo biosynthesis of the peptidoglycan precursor UDP-MurNAc. Plays a role in intrinsic resistance to fosfomycin, which targets the de novo synthesis of UDP-MurNAc. Shows a very low activity on GlcNAc-6P, and neither alpha-1-phosphorylated MurNAc, GlcNAc, or glucose nor glucosamine-6P or glucose-6P can be used as a substrate. In Pseudomonas putida (strain ATCC 47054 / DSM 6125 / CFBP 8728 / NCIMB 11950 / KT2440), this protein is N-acetylmuramic acid 6-phosphate phosphatase.